The chain runs to 634 residues: Chaperone protein DnaK (634 aa).

At threonine 198 the chain carries Phosphothreonine; by autocatalysis. The tract at residues 599–634 (KQTQEGAEAASEAGEQSAGDEGVVDAEFEEVDEQNK) is disordered. A compositionally biased stretch (low complexity) spans 602–619 (QEGAEAASEAGEQSAGDE). A compositionally biased stretch (acidic residues) spans 620–634 (GVVDAEFEEVDEQNK).

This sequence belongs to the heat shock protein 70 family.

Functionally, acts as a chaperone. The chain is Chaperone protein DnaK from Syntrophotalea carbinolica (strain DSM 2380 / NBRC 103641 / GraBd1) (Pelobacter carbinolicus).